Consider the following 24-residue polypeptide: Potassium channel toxin alpha-KTx 6 OcyKTx5 (24 aa).

Cys-3 and Cys-24 are joined by a disulfide.

Belongs to the short scorpion toxin superfamily. Potassium channel inhibitor family. Alpha-KTx 06 subfamily. In terms of tissue distribution, expressed by the venom gland.

The protein localises to the secreted. Its function is as follows. Blocks voltage-gated potassium channels. The polypeptide is Potassium channel toxin alpha-KTx 6 OcyKTx5 (Opisthacanthus cayaporum (South American scorpion)).